Reading from the N-terminus, the 312-residue chain is GATA zinc finger domain-containing protein 20 (312 aa).

Disordered regions lie at residues 1–45 and 213–232; these read MGKR…PQQP and TIGS…TNTN. A compositionally biased stretch (low complexity) spans 29–45; sequence QQQQQQQEQQPQQPQQP. Residues 260–287 form a GATA-type zinc finger; it reads CYVCGVTETPYWRRGTDEGVMVDLCNAC.

This Dictyostelium discoideum (Social amoeba) protein is GATA zinc finger domain-containing protein 20 (gtaT).